The primary structure comprises 1050 residues: MKSEDYTYARMAPDIHEERQYHCEECDQLFESKTELSNHQKYSCGTPHSAFSLVENSFPPILNDDSDLTEMQHAHECKECDQVFPDMQSLEKHLLSHTEEREYKCDQCPKAFNWKSNLIRHQMSHDTGKHYECENCSKQVFTDPSNLQRHIRSQHVGARAHACSECGKTFATSSGLKQHKHIHSSVKPFVCEVCHKSYTQFSNLCRHKRMHADCRTQIKCKDCGQMFSTTSSLNKHRRFCEGKNHFTAGGLFRQGISLPGNTAMDKVSMIGMNHAGLADYFGASRHAAGLTFPTAPGFPFSFPGLFPSSLYHRPHLIPPASPVKGLPGVEQSNKSQSLHVNQPQVLPATQDILKALNKHHSVDENKALEFITENNLNQRPHEKVSDHSESTDLDDVSTPSGSDLETTSGSDLESDIESDKDKLKENGKLYKDKISPLQSLAALNSKREYNNHSVFSPCLEEQTVTGAVNDSIKAIASIAEKYFGSTGLVGLPDKKGTSLPYPSMFPLPFFPAISQSMYTFPERDVRPLPLKVEPESPKESKKVQKGTTESAFDLTTKCKEEKASPNAPSKSSAPTSSKHEQPLDLSMGSRSRATTTKQTESRKNHIFGEKKDIDSELKKTSEHFLQHARPAPFFMDPIYRVEKRKTMDPLEVLKEKYLRSSSGFLFHPQFPLPDQRTWMSAIENMAEKLESFNALKPEANDLIQSVPSMFSFRASSSALPENLLRKGKERYTCRYCGKIFPRSANLTRHLRTHTGEQPYRCKYCDRSFSISSNLQRHIRNIHNKEKPFKCHLCDRCFGQQTNLDRHLKKHENGNLSGTAASSPHSEIEGTGAILEEKEDSYFNEIRNFIGNNSHNKQSPLNIDERINGSHDKIMLTGQNSDILDDDEIEDEAILEDDEESDIDVKVMKEPNASAMLKNCSDEFEEESKSEVNCKVSPSRHDDDDDDEEEDFKKSLSALDHIRHFTDSLKIRKMDDGQFNDAELSPFTASHLTDDLKHPLYRKSKSQTYAMMLSLSDQESMHPTTHTSSSMWHNLARAAAESTALHSVSHV.

3 consecutive C2H2-type zinc fingers follow at residues 21–48, 75–97, and 103–125; these read YHCE…GTPH, HECK…LLSH, and YKCD…QMSH. The C2H2-type 4; degenerate zinc-finger motif lies at 131 to 155; it reads YECENCSKQVFTDPSNLQRHIRSQH. 2 consecutive C2H2-type zinc fingers follow at residues 161–183 and 189–211; these read HACS…KHIH and FVCE…KRMH. The C2H2-type 7; atypical zinc finger occupies 218 to 240; sequence IKCKDCGQMFSTTSSLNKHRRFC. Disordered regions lie at residues 371-421 and 529-612; these read ITEN…SDKD and PLKV…EKKD. Over residues 379-390 the composition is skewed to basic and acidic residues; that stretch reads RPHEKVSDHSES. Over residues 397–411 the composition is skewed to polar residues; the sequence is STPSGSDLETTSGSD. Positions 420-433 match the Nuclear localization signal motif; it reads KDKLKENGKLYKDK. Over residues 529–542 the composition is skewed to basic and acidic residues; sequence PLKVEPESPKESKK. The short motif at 551–555 is the CTBP-binding motif 1 element; that stretch reads AFDLT. Low complexity predominate over residues 564 to 576; sequence SPNAPSKSSAPTS. Positions 582-586 match the CTBP-binding motif 2 motif; that stretch reads PLDLS. A compositionally biased stretch (polar residues) spans 588–598; it reads GSRSRATTTKQ. Residues 599 to 612 show a composition bias toward basic and acidic residues; the sequence is TESRKNHIFGEKKD. 3 consecutive C2H2-type zinc fingers follow at residues 731–753, 759–782, and 788–810; these read YTCR…LRTH, YRCK…RNIH, and FKCH…LKKH. Positions 928–951 are disordered; that stretch reads KSEVNCKVSPSRHDDDDDDEEEDF.

In terms of assembly, homooligomer. Interacts with ctbp.

Its subcellular location is the nucleus. It is found in the nucleus speckle. Its function is as follows. Transcriptional repressor during pronephros development. Plays a role in regionalization of the pronephros; may promote formation of the distal tubule and duct over formation of the glomus and proximal tubule. The protein is MDS1 and EVI1 complex locus protein EVI1-B (mecom-b) of Xenopus laevis (African clawed frog).